An 88-amino-acid polypeptide reads, in one-letter code: Small ribosomal subunit protein bS20 (88 aa).

2 disordered regions span residues 1 to 25 (MANSPQAKKRARQNERRFAINKARR) and 61 to 88 (GVTKGVMHKNTAARKMSRLSSRVKALGA).

The protein belongs to the bacterial ribosomal protein bS20 family.

Binds directly to 16S ribosomal RNA. The sequence is that of Small ribosomal subunit protein bS20 from Jannaschia sp. (strain CCS1).